The primary structure comprises 279 residues: DegV domain-containing protein spr1019 (279 aa).

The DegV domain maps to 4–277; it reads IKIVTDSSVT…ENAWAILIRY (274 aa). Residues Thr-62 and Ser-94 each contribute to the hexadecanoate site.

Its function is as follows. May bind long-chain fatty acids, such as palmitate, and may play a role in lipid transport or fatty acid metabolism. This is DegV domain-containing protein spr1019 from Streptococcus pneumoniae (strain ATCC BAA-255 / R6).